Consider the following 273-residue polypeptide: 3-methyl-2-oxobutanoate hydroxymethyltransferase (273 aa).

2 residues coordinate Mg(2+): D49 and D88. Residues D49–S50, D88, and K118 contribute to the 3-methyl-2-oxobutanoate site. A Mg(2+)-binding site is contributed by E120. Residue E187 is the Proton acceptor of the active site.

This sequence belongs to the PanB family. Homodecamer; pentamer of dimers. Mg(2+) serves as cofactor.

It is found in the cytoplasm. It catalyses the reaction 3-methyl-2-oxobutanoate + (6R)-5,10-methylene-5,6,7,8-tetrahydrofolate + H2O = 2-dehydropantoate + (6S)-5,6,7,8-tetrahydrofolate. Its pathway is cofactor biosynthesis; (R)-pantothenate biosynthesis; (R)-pantoate from 3-methyl-2-oxobutanoate: step 1/2. In terms of biological role, catalyzes the reversible reaction in which hydroxymethyl group from 5,10-methylenetetrahydrofolate is transferred onto alpha-ketoisovalerate to form ketopantoate. This is 3-methyl-2-oxobutanoate hydroxymethyltransferase from Rhizobium etli (strain ATCC 51251 / DSM 11541 / JCM 21823 / NBRC 15573 / CFN 42).